The sequence spans 186 residues: Elongation factor P (186 aa).

Belongs to the elongation factor P family.

The protein localises to the cytoplasm. It participates in protein biosynthesis; polypeptide chain elongation. Functionally, involved in peptide bond synthesis. Stimulates efficient translation and peptide-bond synthesis on native or reconstituted 70S ribosomes in vitro. Probably functions indirectly by altering the affinity of the ribosome for aminoacyl-tRNA, thus increasing their reactivity as acceptors for peptidyl transferase. This chain is Elongation factor P, found in Pelagibacter ubique (strain HTCC1062).